Here is a 323-residue protein sequence, read N- to C-terminus: Thymidylate synthase (323 aa).

Residues arginine 21 and 172–173 (RR) contribute to the dUMP site. Cysteine 192 functions as the Nucleophile in the catalytic mechanism. Residues 214-217 (RSND), asparagine 225, and 255-257 (HVY) contribute to the dUMP site. Aspartate 217 is a (6R)-5,10-methylene-5,6,7,8-tetrahydrofolate binding site. Position 322 (alanine 322) interacts with (6R)-5,10-methylene-5,6,7,8-tetrahydrofolate.

It belongs to the thymidylate synthase family. Bacterial-type ThyA subfamily. In terms of assembly, homodimer.

Its subcellular location is the cytoplasm. The enzyme catalyses dUMP + (6R)-5,10-methylene-5,6,7,8-tetrahydrofolate = 7,8-dihydrofolate + dTMP. It functions in the pathway pyrimidine metabolism; dTTP biosynthesis. In terms of biological role, catalyzes the reductive methylation of 2'-deoxyuridine-5'-monophosphate (dUMP) to 2'-deoxythymidine-5'-monophosphate (dTMP) while utilizing 5,10-methylenetetrahydrofolate (mTHF) as the methyl donor and reductant in the reaction, yielding dihydrofolate (DHF) as a by-product. This enzymatic reaction provides an intracellular de novo source of dTMP, an essential precursor for DNA biosynthesis. The sequence is that of Thymidylate synthase from Pseudomonas putida (strain ATCC 47054 / DSM 6125 / CFBP 8728 / NCIMB 11950 / KT2440).